Here is a 281-residue protein sequence, read N- to C-terminus: MTENTAETADESSDGGVTATTGAATTTPTTPPEPVIRARDLDVFYGSERALESVDIDIPEQQVTAIIGPSGCGKSTFLRCINRMNDRIDAARIDGDLTLRGTNVYDAAVDPVALRRRVGMVFQEPNPFPKSIYDNVAYGLEIQDVEGDHDEIVEQSLRRAALWDEVSHQLDSSGVALSGGQQQRLCIARAIAPDPEVLLMDEPASALDPVATSQVEDLIEELAEEYTVVIVTHNMQQAARISDKTAVFLTGGKLVEFGDTDQIFENPEHQRVEEYITGKFG.

Residues 1–34 (MTENTAETADESSDGGVTATTGAATTTPTTPPEP) are disordered. Over residues 15–28 (GGVTATTGAATTTP) the composition is skewed to low complexity. The ABC transporter domain maps to 36 to 276 (IRARDLDVFY…PEHQRVEEYI (241 aa)). 68 to 75 (GPSGCGKS) serves as a coordination point for ATP.

This sequence belongs to the ABC transporter superfamily. Phosphate importer (TC 3.A.1.7) family. As to quaternary structure, the complex is composed of two ATP-binding proteins (PstB), two transmembrane proteins (PstC and PstA) and a solute-binding protein (PstS).

The protein localises to the cell membrane. It catalyses the reaction phosphate(out) + ATP + H2O = ADP + 2 phosphate(in) + H(+). Its function is as follows. Part of the ABC transporter complex PstSACB involved in phosphate import. Responsible for energy coupling to the transport system. The protein is Phosphate import ATP-binding protein PstB 1 of Halobacterium salinarum (strain ATCC 700922 / JCM 11081 / NRC-1) (Halobacterium halobium).